Consider the following 255-residue polypeptide: Thiazole synthase (255 aa).

Lysine 95 serves as the catalytic Schiff-base intermediate with DXP. Residues glycine 156, 182-183, and 204-205 contribute to the 1-deoxy-D-xylulose 5-phosphate site; these read AG and NT.

Belongs to the ThiG family. As to quaternary structure, homotetramer. Forms heterodimers with either ThiH or ThiS.

The protein localises to the cytoplasm. It carries out the reaction [ThiS sulfur-carrier protein]-C-terminal-Gly-aminoethanethioate + 2-iminoacetate + 1-deoxy-D-xylulose 5-phosphate = [ThiS sulfur-carrier protein]-C-terminal Gly-Gly + 2-[(2R,5Z)-2-carboxy-4-methylthiazol-5(2H)-ylidene]ethyl phosphate + 2 H2O + H(+). It functions in the pathway cofactor biosynthesis; thiamine diphosphate biosynthesis. Catalyzes the rearrangement of 1-deoxy-D-xylulose 5-phosphate (DXP) to produce the thiazole phosphate moiety of thiamine. Sulfur is provided by the thiocarboxylate moiety of the carrier protein ThiS. In vitro, sulfur can be provided by H(2)S. This Vibrio parahaemolyticus serotype O3:K6 (strain RIMD 2210633) protein is Thiazole synthase.